We begin with the raw amino-acid sequence, 473 residues long: Suppressor of SWI4 1 homolog (473 aa).

One can recognise a Brix domain in the interval 29 to 292 (PHSFVFTRGC…LIKVQEGVGE (264 aa)). A phosphoserine mark is found at serine 238 and serine 240. Residues 323–473 (AQRQAQQAQN…GRGRPGKRVA (151 aa)) are disordered. Low complexity predominate over residues 324–334 (QRQAQQAQNVQ). Over residues 335–352 (RKQEQREAHRKKSLEGMK) the composition is skewed to basic and acidic residues. The residue at position 359 (serine 359) is a Phosphoserine. Residues 375–388 (LGEDDDEQEDDDIE) are compositionally biased toward acidic residues. The segment covering 409–421 (KRLAKSPGRKRKR) has biased composition (basic residues). Basic and acidic residues predominate over residues 422–443 (WEMDRGRGRLCDQKFPKTKDKS). At lysine 438 the chain carries N6-acetyllysine. Residues 462–473 (GRGRGRPGKRVA) show a composition bias toward basic residues.

As to expression, widely expressed.

It localises to the nucleus. Its subcellular location is the nucleolus. Its function is as follows. May have a role in cell growth. The sequence is that of Suppressor of SWI4 1 homolog (PPAN) from Homo sapiens (Human).